A 376-amino-acid chain; its full sequence is Erythronate-4-phosphate dehydrogenase (376 aa).

Ser-45 and Thr-67 together coordinate substrate. Residue Asp-147 participates in NAD(+) binding. Arg-209 is an active-site residue. Asp-233 lines the NAD(+) pocket. Residue Glu-238 is part of the active site. His-255 serves as the catalytic Proton donor. Gly-258 contributes to the NAD(+) binding site. Tyr-259 contacts substrate.

The protein belongs to the D-isomer specific 2-hydroxyacid dehydrogenase family. PdxB subfamily. As to quaternary structure, homodimer.

The protein resides in the cytoplasm. It catalyses the reaction 4-phospho-D-erythronate + NAD(+) = (R)-3-hydroxy-2-oxo-4-phosphooxybutanoate + NADH + H(+). Its pathway is cofactor biosynthesis; pyridoxine 5'-phosphate biosynthesis; pyridoxine 5'-phosphate from D-erythrose 4-phosphate: step 2/5. Its function is as follows. Catalyzes the oxidation of erythronate-4-phosphate to 3-hydroxy-2-oxo-4-phosphonooxybutanoate. The chain is Erythronate-4-phosphate dehydrogenase from Shewanella loihica (strain ATCC BAA-1088 / PV-4).